The chain runs to 298 residues: Glycine--tRNA ligase alpha subunit (298 aa).

The protein belongs to the class-II aminoacyl-tRNA synthetase family. Tetramer of two alpha and two beta subunits.

The protein resides in the cytoplasm. It carries out the reaction tRNA(Gly) + glycine + ATP = glycyl-tRNA(Gly) + AMP + diphosphate. In Neisseria meningitidis serogroup C / serotype 2a (strain ATCC 700532 / DSM 15464 / FAM18), this protein is Glycine--tRNA ligase alpha subunit.